We begin with the raw amino-acid sequence, 718 residues long: Probable GTP diphosphokinase RSH2, chloroplastic (718 aa).

Residues 1 to 68 (MSVPAIAVYT…LFSSPTAAPR (68 aa)) constitute a chloroplast transit peptide. Positions 9–48 (YTSPPGAVYTSSSSSELEASSRGSAPCATAAPPSPASSHR) are disordered. Positions 19–39 (SSSSSELEASSRGSAPCATAA) are enriched in low complexity. Residues 243–347 (YLQHCVETAV…IKLADRLHNM (105 aa)) form the HD domain.

This sequence belongs to the RelA/SpoT family.

The protein localises to the plastid. Its subcellular location is the chloroplast. The enzyme catalyses GTP + ATP = guanosine 3'-diphosphate 5'-triphosphate + AMP. In terms of biological role, probable ppGpp (guanosine 3'-diphosphate 5'-diphosphate) synthetase that may be involved in a rapid plant ppGpp-mediated response to pathogens and other stresses. This is Probable GTP diphosphokinase RSH2, chloroplastic (RSH2) from Oryza sativa subsp. japonica (Rice).